We begin with the raw amino-acid sequence, 302 residues long: Sulfate adenylyltransferase subunit 2 (302 aa).

A disordered region spans residues 280–302 (RQGRAIDHDQSGSMELKKRQGYF).

It belongs to the PAPS reductase family. CysD subfamily. In terms of assembly, heterodimer composed of CysD, the smaller subunit, and CysN.

It catalyses the reaction sulfate + ATP + H(+) = adenosine 5'-phosphosulfate + diphosphate. It functions in the pathway sulfur metabolism; hydrogen sulfide biosynthesis; sulfite from sulfate: step 1/3. In terms of biological role, with CysN forms the ATP sulfurylase (ATPS) that catalyzes the adenylation of sulfate producing adenosine 5'-phosphosulfate (APS) and diphosphate, the first enzymatic step in sulfur assimilation pathway. APS synthesis involves the formation of a high-energy phosphoric-sulfuric acid anhydride bond driven by GTP hydrolysis by CysN coupled to ATP hydrolysis by CysD. This chain is Sulfate adenylyltransferase subunit 2, found in Vibrio parahaemolyticus serotype O3:K6 (strain RIMD 2210633).